The sequence spans 57 residues: UPF0391 membrane protein RPA3029 (57 aa).

A run of 2 helical transmembrane segments spans residues 6–26 (WALI…TGIS) and 35–55 (ILFY…FTIF).

Belongs to the UPF0391 family.

It is found in the cell membrane. The sequence is that of UPF0391 membrane protein RPA3029 from Rhodopseudomonas palustris (strain ATCC BAA-98 / CGA009).